Here is a 63-residue protein sequence, read N- to C-terminus: Serine protease inhibitor 3 (63 aa).

A signal peptide spans M1–A23. 3 disulfide bridges follow: C24-C39, C34-C52, and C37-C47. Positions C24 to S55 constitute a Pacifastin domain.

It belongs to the protease inhibitor I19 family. As to expression, expressed in hemolymph, ovaries, testes and fat body of adults but are absent in the gut. Also present in larval hemolymph and fat body.

The protein resides in the secreted. In vitro, active against alpha-chymotrypsin. The sequence is that of Serine protease inhibitor 3 from Schistocerca gregaria (Desert locust).